The chain runs to 713 residues: Phosphoribosylformylglycinamidine synthase subunit PurL (713 aa).

The active site involves histidine 32. Tyrosine 35 lines the ATP pocket. Glutamate 76 serves as a coordination point for Mg(2+). Residues 77 to 80 (SHNH) and arginine 99 contribute to the substrate site. Histidine 78 acts as the Proton acceptor in catalysis. Aspartate 100 is a Mg(2+) binding site. Glutamine 224 lines the substrate pocket. Aspartate 252 contacts Mg(2+). A substrate-binding site is contributed by 296–298 (ESQ). ATP contacts are provided by aspartate 471 and glycine 508. Asparagine 509 is a binding site for Mg(2+). Serine 511 provides a ligand contact to substrate.

The protein belongs to the FGAMS family. In terms of assembly, monomer. Part of the FGAM synthase complex composed of 1 PurL, 1 PurQ and 2 PurS subunits.

Its subcellular location is the cytoplasm. The enzyme catalyses N(2)-formyl-N(1)-(5-phospho-beta-D-ribosyl)glycinamide + L-glutamine + ATP + H2O = 2-formamido-N(1)-(5-O-phospho-beta-D-ribosyl)acetamidine + L-glutamate + ADP + phosphate + H(+). Its pathway is purine metabolism; IMP biosynthesis via de novo pathway; 5-amino-1-(5-phospho-D-ribosyl)imidazole from N(2)-formyl-N(1)-(5-phospho-D-ribosyl)glycinamide: step 1/2. Functionally, part of the phosphoribosylformylglycinamidine synthase complex involved in the purines biosynthetic pathway. Catalyzes the ATP-dependent conversion of formylglycinamide ribonucleotide (FGAR) and glutamine to yield formylglycinamidine ribonucleotide (FGAM) and glutamate. The FGAM synthase complex is composed of three subunits. PurQ produces an ammonia molecule by converting glutamine to glutamate. PurL transfers the ammonia molecule to FGAR to form FGAM in an ATP-dependent manner. PurS interacts with PurQ and PurL and is thought to assist in the transfer of the ammonia molecule from PurQ to PurL. This chain is Phosphoribosylformylglycinamidine synthase subunit PurL, found in Thermococcus sibiricus (strain DSM 12597 / MM 739).